The sequence spans 194 residues: dATP triphosphohydrolase (194 aa).

A dATP-binding site is contributed by R17. 6 residues coordinate Co(2+): H32, H71, D72, E75, D80, and D123.

Belongs to the Caudovirales dATP triphosphohydrolase family. Co(2+) is required as a cofactor.

The enzyme catalyses dATP + H2O = 2'-deoxyadenosine + triphosphate + H(+). It carries out the reaction dADP + H2O = 2'-deoxyadenosine + diphosphate. It catalyses the reaction dAMP + H2O = 2'-deoxyadenosine + phosphate. Functionally, catalyzes the hydrolysis of dATP, dADP and dAMP into dA. This step is essential for Z-genome synthesis (containing aminoadenine instead of adenine). Specifically removes dATP and its precursor dADP from the nucleotide pool of the host, preventing the incorporation of A into the phage genome and favoring the integration of the Z-base into the viral genome. The polypeptide is dATP triphosphohydrolase (datZ) (Salmonella phage PMBT28).